Consider the following 270-residue polypeptide: F-actin-capping protein subunit beta (270 aa).

Polar residues predominate over residues 245–258 (QTRSQKSTTDSQEQ). The tract at residues 245 to 270 (QTRSQKSTTDSQEQQQKEVIKGLQNL) is disordered.

It belongs to the F-actin-capping protein beta subunit family. In terms of assembly, component of the F-actin capping complex, composed of a heterodimer of an alpha and a beta subunit.

It is found in the cytoplasm. Its subcellular location is the cytoskeleton. The protein localises to the actin patch. Its function is as follows. F-actin-capping proteins bind in a Ca(2+)-independent manner to the fast growing ends of actin filaments (barbed end) thereby blocking the exchange of subunits at these ends. Unlike other capping proteins (such as gelsolin and severin), these proteins do not sever actin filaments. In Candida glabrata (strain ATCC 2001 / BCRC 20586 / JCM 3761 / NBRC 0622 / NRRL Y-65 / CBS 138) (Yeast), this protein is F-actin-capping protein subunit beta (CAP2).